A 364-amino-acid chain; its full sequence is Sec-independent protein translocase protein TatC (364 aa).

The next 7 helical transmembrane spans lie at 42-62, 107-127, 139-159, 160-180, 194-214, 225-245, and 246-266; these read IALL…PRIF, MIAA…SFIT, LTFV…AYLT, LSTG…SVLD, IFGL…AGIV, PEIF…DPFT, and MLAL…IGWL. Residues 277-364 form a disordered region; it reads TSPYADLDDD…STDVTHGDIT (88 aa). Positions 282-295 are enriched in acidic residues; the sequence is DLDDDETSPLDFDD. Residues 301-320 are compositionally biased toward low complexity; sequence AASAGPAATATSPGTANPPG. Polar residues predominate over residues 324 to 344; it reads PPGTANPVGTANPVGTGSSTP.

The protein belongs to the TatC family. The Tat system comprises two distinct complexes: a TatABC complex, containing multiple copies of TatA, TatB and TatC subunits, and a separate TatA complex, containing only TatA subunits. Substrates initially bind to the TatABC complex, which probably triggers association of the separate TatA complex to form the active translocon.

Its subcellular location is the cell membrane. In terms of biological role, part of the twin-arginine translocation (Tat) system that transports large folded proteins containing a characteristic twin-arginine motif in their signal peptide across membranes. Together with TatB, TatC is part of a receptor directly interacting with Tat signal peptides. The protein is Sec-independent protein translocase protein TatC of Frankia casuarinae (strain DSM 45818 / CECT 9043 / HFP020203 / CcI3).